We begin with the raw amino-acid sequence, 264 residues long: ATP synthase subunit a (264 aa).

A run of 6 helical transmembrane segments spans residues 29–49 (TWHI…LWIF), 90–110 (IAPL…MDMI), 134–154 (DVNI…FYSI), 177–197 (IPVN…SLAL), 208–228 (LIFI…TLGV), and 235–255 (LIFH…LTIV).

The protein belongs to the ATPase A chain family. In terms of assembly, F-type ATPases have 2 components, CF(1) - the catalytic core - and CF(0) - the membrane proton channel. CF(1) has five subunits: alpha(3), beta(3), gamma(1), delta(1), epsilon(1). CF(0) has three main subunits: a(1), b(2) and c(9-12). The alpha and beta chains form an alternating ring which encloses part of the gamma chain. CF(1) is attached to CF(0) by a central stalk formed by the gamma and epsilon chains, while a peripheral stalk is formed by the delta and b chains.

It is found in the cell inner membrane. Key component of the proton channel; it plays a direct role in the translocation of protons across the membrane. The polypeptide is ATP synthase subunit a (Shewanella baltica (strain OS223)).